A 160-amino-acid polypeptide reads, in one-letter code: Cytochrome b6-f complex subunit 4 (160 aa).

Transmembrane regions (helical) follow at residues 36–56 (LLYIFPVVILGTIACNVGLAV), 95–115 (LLGVLLMVSVPAGLLTVPFLE), and 131–151 (TVFLIGTAVALWLGIGATLPI).

It belongs to the cytochrome b family. PetD subfamily. The 4 large subunits of the cytochrome b6-f complex are cytochrome b6, subunit IV (17 kDa polypeptide, petD), cytochrome f and the Rieske protein, while the 4 small subunits are petG, petL, petM and petN. The complex functions as a dimer.

The protein resides in the plastid. Its subcellular location is the chloroplast thylakoid membrane. Component of the cytochrome b6-f complex, which mediates electron transfer between photosystem II (PSII) and photosystem I (PSI), cyclic electron flow around PSI, and state transitions. This is Cytochrome b6-f complex subunit 4 from Morus indica (Mulberry).